Here is a 142-residue protein sequence, read N- to C-terminus: Large ribosomal subunit protein uL23 (142 aa).

This sequence belongs to the universal ribosomal protein uL23 family.

In Kluyveromyces lactis (strain ATCC 8585 / CBS 2359 / DSM 70799 / NBRC 1267 / NRRL Y-1140 / WM37) (Yeast), this protein is Large ribosomal subunit protein uL23 (RPL25).